The primary structure comprises 174 residues: Shikimate kinase 2 (174 aa).

12 to 17 contributes to the ATP binding site; that stretch reads GCGKTT. The Mg(2+) site is built by T16 and D32. Substrate is bound by residues D34, R58, and G79. The segment at 112–126 is LID domain; sequence QAAPEEDLRPTLTGK. An ATP-binding site is contributed by R120. R139 contacts substrate.

This sequence belongs to the shikimate kinase family. AroL subfamily. Monomer. The cofactor is Mg(2+).

Its subcellular location is the cytoplasm. The enzyme catalyses shikimate + ATP = 3-phosphoshikimate + ADP + H(+). The protein operates within metabolic intermediate biosynthesis; chorismate biosynthesis; chorismate from D-erythrose 4-phosphate and phosphoenolpyruvate: step 5/7. In terms of biological role, catalyzes the specific phosphorylation of the 3-hydroxyl group of shikimic acid using ATP as a cosubstrate. This chain is Shikimate kinase 2, found in Escherichia coli O7:K1 (strain IAI39 / ExPEC).